A 206-amino-acid polypeptide reads, in one-letter code: Two-component response regulator ARR7 (206 aa).

One can recognise a Response regulatory domain in the interval 25 to 152 (HVLAVDDSIV…DVKRIKQLIM (128 aa)). The residue at position 85 (Asp-85) is a 4-aspartylphosphate. The tract at residues 165–206 (SNKRKLQEDSDTSSSSHDDTSIKDSSCSKRMKSESENLFSLL) is disordered.

This sequence belongs to the ARR family. Type-A subfamily. In terms of processing, two-component system major event consists of a His-to-Asp phosphorelay between a sensor histidine kinase (HK) and a response regulator (RR). In plants, the His-to-Asp phosphorelay involves an additional intermediate named Histidine-containing phosphotransfer protein (HPt). This multistep phosphorelay consists of a His-Asp-His-Asp sequential transfer of a phosphate group between first a His and an Asp of the HK protein, followed by the transfer to a conserved His of the HPt protein and finally the transfer to an Asp in the receiver domain of the RR protein. In terms of tissue distribution, predominantly expressed in roots and young flowers.

Its subcellular location is the nucleus. In terms of biological role, functions as a response regulator involved in His-to-Asp phosphorelay signal transduction system. Phosphorylation of the Asp residue in the receiver domain activates the ability of the protein to promote the transcription of target genes. Type-A response regulators seem to act as negative regulators of the cytokinin signaling. This is Two-component response regulator ARR7 (ARR7) from Arabidopsis thaliana (Mouse-ear cress).